The following is a 60-amino-acid chain: Metallothionein B (60 aa).

Residues 1-28 (MDPCDCSKSGTCNCGGSCTCTNCSCTSC) are beta. C4, C6, C12, C14, C18, C20, C23, C25, C28, C32, C33, C35, C36, C40, C43, C47, C49, C54, C58, and C59 together coordinate a divalent metal cation. The interval 29–60 (KKSCCPCCPSGCTKCASGCVCKGKTCDTSCCQ) is alpha.

Belongs to the metallothionein superfamily. Type 1 family.

Its function is as follows. Metallothioneins have a high content of cysteine residues that bind various heavy metals. This Chionodraco hamatus (Antarctic teleost icefish) protein is Metallothionein B (mtb).